The following is a 123-amino-acid chain: cAMP-responsive element-binding protein-like 2 (123 aa).

The segment at 1–24 (MDDSKVVGGKVKKPGKRGRKPAKI) is disordered. The span at 10 to 21 (KVKKPGKRGRKP) shows a compositional bias: basic residues. The bZIP domain occupies 23-86 (KIDLKAKLER…MAMDQGKIPS (64 aa)). Residues 29 to 60 (KLERSRQSARECRARKKLRYQYLEELVSSRER) are basic motif. Positions 62-69 (ICALREEL) are leucine-zipper. The tract at residues 93 to 123 (TGEEQNKSQQNSSRHPKAGKTDANTNSLVGN) is disordered. Polar residues predominate over residues 114–123 (DANTNSLVGN).

It belongs to the bZIP family. ATF subfamily. In terms of assembly, interacts with CREB1; regulates CREB1 phosphorylation, stability and transcriptional activity. In terms of processing, phosphorylated by AMPK.

The protein resides in the nucleus. Its function is as follows. Probable regulator of CREB1 transcriptional activity which is involved in adipose cells differentiation. May also play a regulatory role in the cell cycle. The chain is cAMP-responsive element-binding protein-like 2 (Crebl2) from Rattus norvegicus (Rat).